A 502-amino-acid polypeptide reads, in one-letter code: Cysteine protease RavZ (502 aa).

2 consecutive short sequence motifs (LIR) follow at residues D9–E23 and E23–K37. The tract at residues S49–L325 is catalytic region. Residues H176 and D197 contribute to the active site. Positions Y211–R217 are alpha-3 helix. C258 is an active-site residue. Residues P326–T431 are membrane targeting region. Residues D429–L443 carry the LIR 3 motif.

It localises to the secreted. Its subcellular location is the host cytoplasmic vesicle membrane. The enzyme catalyses [protein]-C-terminal L-amino acid-glycyl-phosphatidylethanolamide + H2O = a 1,2-diacyl-sn-glycero-3-phosphoethanolamine-N-glycine + [protein]-C-terminal &lt;stereo&gt;L-&lt;/stereo&gt;amino acid. It catalyses the reaction [protein]-C-terminal L-amino acid-glycyl-phosphatidylserine + H2O = 1,2-diacyl-sn-glycero-3-phospho-L-serine-N-glycine + [protein]-C-terminal &lt;stereo&gt;L-&lt;/stereo&gt;amino acid. Its function is as follows. Cysteine protease effector that inhibits host cell autophagy by targeting lipid-conjugated ATG8 family proteins on pre-autophagosomal structures. Specifically hydrolyzes the amide bond between the C-terminal glycine residue and an adjacent aromatic residue in ATG8 proteins conjugated to phosphatidylethanolamine (PE), producing an ATG8 protein that cannot be reconjugated by host ATG7 and ATG3. Mechanistically, Ravz interacts with ATG8 proteins conjugated to PE via its LIR motifs, extracts them from the membrane of autophagosomes and integrates the PE part into its own lipid-binding site. It then removes the lipid component of the ATG8 protein. Also able to mediate delipidation of ATG8 proteins conjugated to phosphatidylserine (PS) during non-canonical autophagy. Inhibits host ubiquitin recruitment to bacteria-containing vacuoles, suggesting that it is able to mediate delipidation of other proteins in addition to ATG8 proteins. It is however not involved in the exclusion of autophagy adapters from bacteria-containing vacuoles decorated with ubiquitin. The chain is Cysteine protease RavZ from Legionella pneumophila subsp. pneumophila (strain Philadelphia 1 / ATCC 33152 / DSM 7513).